The chain runs to 425 residues: MLDLKFVQNNLDVVRESLEKRGSKLDVNEFSDLDSRRKSLLQEVESLKAERNSTSGEIAKIKREGGDASEIIARMGEVSGKIKALDEDLKDIEAAEREWLSSVPNMPDESVPFGKTEDDNPVIRHWGEKPEFDFTPREHWDLAVELGGVDFERAAKLTGARFVVLKKWGARLERALTSFMVDVQTMDHGYTEVIPPYIVNRDSLFGTGQLPKFEEDLFKLKNWEYYMIPTAEVPLTNLHRDEVLSEDDLSIAYCAPTPCFRSEAGSYGKDTKGLIRQHQFHKVEMVRFAHPDKSFEDLEKMTGHAEEILKRLGLHYRVITLCTGDMGFGSAKTYDIEVWLPGQDKYREISSCSNCVDFQARRANIKFQPKDSKKKQFVHTLNGSGLAVGRTFVAVVENYQQKDGSIVIPEALRPYMGGLEVITAE.

T230 to E232 serves as a coordination point for L-serine. R261–E263 lines the ATP pocket. E284 is a binding site for L-serine. Position 348–351 (E348–S351) interacts with ATP. S384 contacts L-serine.

Belongs to the class-II aminoacyl-tRNA synthetase family. Type-1 seryl-tRNA synthetase subfamily. Homodimer. The tRNA molecule binds across the dimer.

Its subcellular location is the cytoplasm. It catalyses the reaction tRNA(Ser) + L-serine + ATP = L-seryl-tRNA(Ser) + AMP + diphosphate + H(+). The enzyme catalyses tRNA(Sec) + L-serine + ATP = L-seryl-tRNA(Sec) + AMP + diphosphate + H(+). Its pathway is aminoacyl-tRNA biosynthesis; selenocysteinyl-tRNA(Sec) biosynthesis; L-seryl-tRNA(Sec) from L-serine and tRNA(Sec): step 1/1. Catalyzes the attachment of serine to tRNA(Ser). Is also able to aminoacylate tRNA(Sec) with serine, to form the misacylated tRNA L-seryl-tRNA(Sec), which will be further converted into selenocysteinyl-tRNA(Sec). The sequence is that of Serine--tRNA ligase from Maridesulfovibrio salexigens (strain ATCC 14822 / DSM 2638 / NCIMB 8403 / VKM B-1763) (Desulfovibrio salexigens).